The following is a 437-amino-acid chain: Membrane protein NfeD1b (437 aa).

Helical transmembrane passes span 2–22, 231–251, 253–273, 288–308, and 316–336; these read LQIK…LLGV, WLTN…GLTV, LFSP…LLFF, LLFI…GGII, and IIAS…SLLI.

The protein belongs to the NfeD family.

It localises to the cell membrane. The sequence is that of Membrane protein NfeD1b from Bacillus subtilis (strain 168).